Reading from the N-terminus, the 414-residue chain is Esterase FrsA (414 aa).

Belongs to the FrsA family.

It carries out the reaction a carboxylic ester + H2O = an alcohol + a carboxylate + H(+). In terms of biological role, catalyzes the hydrolysis of esters. This Shigella boydii serotype 18 (strain CDC 3083-94 / BS512) protein is Esterase FrsA.